A 498-amino-acid polypeptide reads, in one-letter code: Glutamate--tRNA ligase (498 aa).

The 'HIGH' region signature appears at 11 to 21 (PSPTGHLHIGN). The 'KMSKS' region motif lies at 261–265 (KLSKR). Lys-264 provides a ligand contact to ATP.

Belongs to the class-I aminoacyl-tRNA synthetase family. Glutamate--tRNA ligase type 1 subfamily. Monomer.

Its subcellular location is the cytoplasm. It carries out the reaction tRNA(Glu) + L-glutamate + ATP = L-glutamyl-tRNA(Glu) + AMP + diphosphate. Catalyzes the attachment of glutamate to tRNA(Glu) in a two-step reaction: glutamate is first activated by ATP to form Glu-AMP and then transferred to the acceptor end of tRNA(Glu). This is Glutamate--tRNA ligase from Oenococcus oeni (strain ATCC BAA-331 / PSU-1).